A 32-amino-acid chain; its full sequence is Sodium channel neurotoxin BmK NT2 (32 aa).

The LCN-type CS-alpha/beta domain occupies 2 to 32 (RDAYIAKPENCVYHCAGNEGCNNLCTCNGAT).

In terms of tissue distribution, expressed by the venom gland.

The protein localises to the secreted. Alpha toxins bind voltage-independently at site-3 of sodium channels (Nav) and inhibit the inactivation of the activated channels, thereby blocking neuronal transmission. This toxin dose-dependently delays inactivation of voltage-gated sodium channels (Nav) (EC(50)=0.91 uM), and shifts the steady-state activation and inactivation to hyperpolarized direction. In addition, it dose-dependently alters calcium dynamics and increases phosphorylation of MAP kinases 1/3 (MAPK1/MAPK3) and cAMP-response element binding (CREB) proteins in neocortical neurons. This effect is eliminated by tetrodotoxin, a Nav blocker. The polypeptide is Sodium channel neurotoxin BmK NT2 (Olivierus martensii (Manchurian scorpion)).